The primary structure comprises 409 residues: MKYSIDDLIFSKDIDEDLYCQLCCNLMNESVSCPNGHCLCKGCFHKQIETVKSECPICCIPVTIQTLCKNIYLQKHINNLKVYCPNSFLNNDNNKLILDEKKGCKEILTIEQLKNGKHLKECKFTFVSCEYNEKCGKYRMNEIENHQDQCNYYPTKCFYCKNDFERMNLSNHLLLDCPLVIIGCRYKDGGCNETFPRHELSKHLALEDNHQQYISNIINGHQSLLKSTSKQLKQLRSSCEELETKLINNDYSFNGRWIIKQFSAHFDLFKENPFTNLIISPPIFLTPTKEFSLSLSADTVVNSVNCISVILSKQFQSSSTIKFSFEITNQSQTKSIKKEEKKKFSHLIGSSHSIEFPTSEIYNIHNKFIVNDQLIIKFNIKILSIQDEQQEIEESEENFNNTLITELEE.

The RING-type; degenerate zinc finger occupies 20 to 59 (CQLCCNLMNESVSCPNGHCLCKGCFHKQIETVKSECPICC). TRAF-type zinc fingers lie at residues 75 to 145 (KHIN…EIEN) and 145 to 201 (NHQD…HELS). The stretch at 221-250 (HQSLLKSTSKQLKQLRSSCEELETKLINND) forms a coiled coil. The MATH domain occupies 252-380 (SFNGRWIIKQ…NDQLIIKFNI (129 aa)).

Belongs to the TNF receptor-associated factor family. A subfamily.

It is found in the cytoplasm. Its function is as follows. Probable adapter protein and signal transducer that links members of the tumor necrosis factor receptor family to different signaling pathways by association with the receptor cytoplasmic domain and kinases. This is TNF receptor-associated factor family protein DDB_G0273435/DDB_G0273505 from Dictyostelium discoideum (Social amoeba).